The following is a 154-amino-acid chain: Transcriptional repressor NrdR (154 aa).

The segment at 3–34 is a zinc-finger region; it reads CPFCGANDTKVIDSRLVAEGEQVRRRRECLAC. Residues 49–139 enclose the ATP-cone domain; sequence PRLIKQDGSR…VYRRFQDLNE (91 aa).

It belongs to the NrdR family. It depends on Zn(2+) as a cofactor.

Its function is as follows. Negatively regulates transcription of bacterial ribonucleotide reductase nrd genes and operons by binding to NrdR-boxes. The chain is Transcriptional repressor NrdR from Pseudomonas syringae pv. syringae (strain B728a).